The primary structure comprises 281 residues: Probable ABC transporter ATP-binding protein AZC_3926 (281 aa).

The disordered stretch occupies residues 1–38 (MNVLSMFGRNATRETSSPAATAGRYADEGDWEGDDHQP). In terms of domain architecture, ABC transporter spans 45-277 (LAAFGLAKSY…PDVRRLYLGE (233 aa)). 77-84 (GPNGAGKT) contacts ATP.

The protein belongs to the ABC transporter superfamily.

This chain is Probable ABC transporter ATP-binding protein AZC_3926, found in Azorhizobium caulinodans (strain ATCC 43989 / DSM 5975 / JCM 20966 / LMG 6465 / NBRC 14845 / NCIMB 13405 / ORS 571).